Reading from the N-terminus, the 868-residue chain is MGTTASTAQQTVSASAFESVHGIGTMEDQRSLSIHSFQTLGLHNSKAKSIITNKVAPVVITYNCREEFQIHDDLLKANYTVGRISDATLEHYLVQGKYFMVRDVYSKLDVLNTTASCGAPNFRQAKGGYAVFGMGQPSLGGFKLVLQKLQREGHKECVFFCVREEPVLFLRVESDFVPYTPRGKENLHENLHSLRRGLRVEDLELTIRKEIHDFAQLSEGVYYVYNDIERFRDEPHTVRVQGEEDIHVTEEVYRRPIFLLPTYRYHRLPLPVDGAPLEEQFDAFICFLRESSGLLLRDPSRPPPALLFSCQTGVGRTNLAMALGTLILHHHRGAAPKPDPPHPAKMPPRARFRVIQSFIEMVPKGQQMVEEVDSVIASCSEMHDMKEAIYESKKKLEGIGEDYQIQGNSTKEYFLQRTLQSLERYFYLIAFNYYLHEQYPLGFALSFSRWMCRHPELYRLQAIMNSSELTITGDLITKGTRVLVVDERFCPDVLSTVKEMSVANFRRVPKMPIYGTAQPSSKALGSVLRYLTDAKRKHSRILWVSLREEVVLEGNEQIYTLREPGSLDQLIPVPVSTPEQLEKLESTLKGDLLKSQKWLEVYLEAEKQMKMFKSCLTTQEIFNQHKSTCQGLTYRRIPIPDFCAPKEQDFDRLLEAMKSALAEDSQTAFVFNCASGRGRTTTAMVIAVLTLWHFNGIPEMSEEEIVSVPDAKYTKGEFEVVMKVVQLLPDGHRMKKEVDMALDTVSETMTPMHYHLREIIICTYRQGRSGKDEQERRLLRLRSLQYLERYIYLILFNSYLHLEKKDSWQRPFSLWMREVAAVAGVYEVLDGLGFPELEQLEDEEPLRKLRGRWRAQSGAGWPSRGDLV.

A lipid anchor (N-myristoyl glycine) is attached at G2.

Belongs to the paladin family.

Its subcellular location is the cytoplasm. The protein localises to the cytosol. The chain is Paladin (PALD1) from Gallus gallus (Chicken).